The following is a 187-amino-acid chain: Ribonuclease HII (187 aa).

The RNase H type-2 domain occupies 1–187 (MIILGIDEAG…YKPVQVLLNE (187 aa)). A divalent metal cation is bound by residues Asp-7, Glu-8, and Asp-99.

This sequence belongs to the RNase HII family. Mn(2+) is required as a cofactor. Mg(2+) serves as cofactor.

The protein localises to the cytoplasm. The enzyme catalyses Endonucleolytic cleavage to 5'-phosphomonoester.. Functionally, endonuclease that specifically degrades the RNA of RNA-DNA hybrids. The sequence is that of Ribonuclease HII from Francisella tularensis subsp. mediasiatica (strain FSC147).